Consider the following 230-residue polypeptide: UPF0173 metal-dependent hydrolase Acid_3917 (230 aa).

This sequence belongs to the UPF0173 family.

The sequence is that of UPF0173 metal-dependent hydrolase Acid_3917 from Solibacter usitatus (strain Ellin6076).